We begin with the raw amino-acid sequence, 355 residues long: Peptide chain release factor 1 (355 aa).

Glutamine 231 carries the N5-methylglutamine modification. The segment covering 280 to 291 (SERLAKESEARK) has biased composition (basic and acidic residues). Positions 280 to 303 (SERLAKESEARKSQVGSGDRSERI) are disordered.

The protein belongs to the prokaryotic/mitochondrial release factor family. Post-translationally, methylated by PrmC. Methylation increases the termination efficiency of RF1.

It is found in the cytoplasm. In terms of biological role, peptide chain release factor 1 directs the termination of translation in response to the peptide chain termination codons UAG and UAA. In Campylobacter jejuni (strain RM1221), this protein is Peptide chain release factor 1.